We begin with the raw amino-acid sequence, 1185 residues long: Pyruvate carboxylase (1185 aa).

The Biotin carboxylation domain maps to 32-484 (KFTKVLVANR…WTTFIDDTPE (453 aa)). ATP-binding residues include lysine 150, glutamate 234, and histidine 269. The 198-residue stretch at 154–351 (RAIAIRCGVP…IVSAQLHVAA (198 aa)) folds into the ATP-grasp domain. Arginine 326 is an active-site residue. Positions 570-838 (GLIMDTTWRD…QLEFDNNQLR (269 aa)) constitute a Pyruvate carboxyltransferase domain. Substrate contacts are provided by residues 578–582 (RDAHQ) and arginine 651. Aspartate 579 contacts a divalent metal cation. A divalent metal cation is bound by residues lysine 747, histidine 777, and histidine 779. Lysine 747 carries the N6-carboxylysine modification. Residue threonine 912 participates in substrate binding. The region spanning 1108 to 1183 (RADPGNPGHV…NGGDLCAVLE (76 aa)) is the Biotinyl-binding domain. Residue lysine 1149 is modified to N6-biotinyllysine.

Biotin serves as cofactor. Requires Zn(2+) as cofactor.

It localises to the cytoplasm. It catalyses the reaction hydrogencarbonate + pyruvate + ATP = oxaloacetate + ADP + phosphate + H(+). It participates in carbohydrate biosynthesis; gluconeogenesis. Pyruvate carboxylase catalyzes a 2-step reaction, involving the ATP-dependent carboxylation of the covalently attached biotin in the first step and the transfer of the carboxyl group to pyruvate in the second. In Schizosaccharomyces pombe (strain 972 / ATCC 24843) (Fission yeast), this protein is Pyruvate carboxylase (pyr1).